Consider the following 141-residue polypeptide: Protein stum homolog (141 aa).

S26 is modified (phosphoserine). 2 helical membrane-spanning segments follow: residues F51–V71 and R87–A107.

This sequence belongs to the SPEC3 family. Stum subfamily.

The protein localises to the membrane. This Mus musculus (Mouse) protein is Protein stum homolog.